The chain runs to 288 residues: Transposase InsF for insertion sequence IS3A (288 aa).

The Integrase catalytic domain maps to 124 to 287 (YASGPNQKWA…SPEQFENKNL (164 aa)).

The protein belongs to the transposase IS3/IS150/IS904 family.

In terms of biological role, involved in the transposition of the insertion sequence IS3. In Escherichia coli (strain K12), this protein is Transposase InsF for insertion sequence IS3A (insF1).